The following is a 409-amino-acid chain: MGANGDVALSRIGATRPALSAWRFVTVFGVVGLLADVVYEGARSITGPLLASLGATGLVVGVVTGVGEAAALGLRLVSGPLADRSRRFWAWTIAGYTLTVVTVPLLGIAGALWVACALVIAERVGKAVRGPAKDTLLSHAASVTGRGRGFAVHEALDQVGAMIGPLTVAGMLAITGNAYAPALGVLTLPGGAALALLLWLQRRVPRPESYEDCPVVLGNPSAPRPWALPAQFWLYCGFTAITMLGFGTFGLLSFHMVSHGVLAAAMVPVVYAAAMAADALTALASGFSYDRYGAKTLAVLPILSILVVLFAFTDNVTMVVIGTLVWGAAVGIQESTLRGVVADLVASPRRASAYGVFAAGLGAATAGGGALIGWLYDISIGTLVVVVIALELMALVMMFAIRLPRVAPS.

Helical transmembrane passes span 18-38 (ALSA…ADVV), 47-67 (GPLL…TGVG), 100-120 (VVTV…ALVI), 159-179 (VGAM…GNAY), 180-200 (APAL…LLWL), 232-252 (FWLY…FGLL), 260-280 (GVLA…ADAL), 302-322 (ILSI…VVIG), 355-375 (GVFA…IGWL), and 380-400 (IGTL…MMFA).

The protein resides in the cell membrane. This is an uncharacterized protein from Mycobacterium tuberculosis (strain CDC 1551 / Oshkosh).